We begin with the raw amino-acid sequence, 487 residues long: MSSLHIYNSLTRTKEPFKPIHPGLATIYVCGPTVYGHAHLGHAKSYVSFDVVVRWLRHVGEEQGYKVRYVQNITDVGHLTDDADEGEDKIQKQARQERIEPMEVAQYYTRSFYEDMDRLGVERPNIAPTATGHIPEQIALVERLIESGHAYESNGNVYFDVNSFEGYGKLSGRTDQEALQSGGRVAERSDKRNPSDFALWKKAEPGHIMKWQSPWGEGYPGWHLECSAMAMKYLGDTIDIHGGGMENKFPHHDCEIAQSEAATGKPFVRYWMHNNMVTVDGVKMGKSLKNFVNLKELFGKFDPLVIRFFILQSHYRSPLDFSEAAIRASQSGFEKLQETYKRLVESAEGKGQLDVATFEQKITDALNDDFNTPVAIAVLFEFIKALNGALDKDGLDAASKSGAQNLFDSYAGKVLGILKSRDELLAGESGESAQTLNDVMAVLLELRKEARASKDFATSDKIRDLLMERGIEIKDTREGATWSKKKA.

A Zn(2+)-binding site is contributed by cysteine 30. The 'HIGH' region signature appears at 32-42 (PTVYGHAHLGH). Residues cysteine 226, histidine 251, and glutamate 255 each contribute to the Zn(2+) site. The 'KMSKS' region motif lies at 283 to 287 (KMGKS). Residue lysine 286 participates in ATP binding.

This sequence belongs to the class-I aminoacyl-tRNA synthetase family. As to quaternary structure, monomer. Zn(2+) is required as a cofactor.

It is found in the cytoplasm. It catalyses the reaction tRNA(Cys) + L-cysteine + ATP = L-cysteinyl-tRNA(Cys) + AMP + diphosphate. The protein is Cysteine--tRNA ligase (cysS) of Chlorobaculum tepidum (strain ATCC 49652 / DSM 12025 / NBRC 103806 / TLS) (Chlorobium tepidum).